Consider the following 135-residue polypeptide: Probable disulfide formation protein (135 aa).

Residues 7 to 26 (SYCLYLAWLFSCIGTLMSVY) form a helical membrane-spanning segment. A disulfide bond links Cys36 and Cys39. The next 2 helical transmembrane spans lie at 41–60 (YQRI…AYRE) and 67–84 (YTLP…YQVC). Cysteines 96 and 101 form a disulfide. Residues 109–131 (GFITMPMASAAAFCAIACLLVLA) form a helical membrane-spanning segment.

Belongs to the DsbB family. BdbC subfamily.

It localises to the cell inner membrane. Functionally, required for disulfide bond formation in some proteins. This is Probable disulfide formation protein from Chlamydia trachomatis serovar D (strain ATCC VR-885 / DSM 19411 / UW-3/Cx).